Here is a 951-residue protein sequence, read N- to C-terminus: Protein translocase subunit SecA (951 aa).

ATP is bound by residues glutamine 90, glycine 108 to threonine 112, and aspartate 509.

The protein belongs to the SecA family. In terms of assembly, monomer and homodimer. Part of the essential Sec protein translocation apparatus which comprises SecA, SecYEG and auxiliary proteins SecDF. Other proteins may also be involved.

Its subcellular location is the cell inner membrane. It localises to the cellular thylakoid membrane. It is found in the cytoplasm. The enzyme catalyses ATP + H2O + cellular proteinSide 1 = ADP + phosphate + cellular proteinSide 2.. Part of the Sec protein translocase complex. Interacts with the SecYEG preprotein conducting channel. Has a central role in coupling the hydrolysis of ATP to the transfer of proteins into and across the cell membrane, serving as an ATP-driven molecular motor driving the stepwise translocation of polypeptide chains across the membrane. In terms of biological role, probably participates in protein translocation into and across both the cytoplasmic and thylakoid membranes in cyanobacterial cells. The polypeptide is Protein translocase subunit SecA (Prochlorococcus marinus (strain MIT 9303)).